Here is a 128-residue protein sequence, read N- to C-terminus: Glycine cleavage system H protein (128 aa).

Positions 24–106 (VYSVGITEHA…YTDGWLFSIK (83 aa)) constitute a Lipoyl-binding domain. Lys65 carries the post-translational modification N6-lipoyllysine.

Belongs to the GcvH family. As to quaternary structure, the glycine cleavage system is composed of four proteins: P, T, L and H. (R)-lipoate is required as a cofactor.

Its function is as follows. The glycine cleavage system catalyzes the degradation of glycine. The H protein shuttles the methylamine group of glycine from the P protein to the T protein. The polypeptide is Glycine cleavage system H protein (Yersinia enterocolitica serotype O:8 / biotype 1B (strain NCTC 13174 / 8081)).